Here is a 178-residue protein sequence, read N- to C-terminus: Ribulose bisphosphate carboxylase small subunit, chloroplastic (178 aa).

The transit peptide at 1 to 55 directs the protein to the chloroplast; it reads MASSMMVSTAAVSRTSPAQSNMVVPFAGLHSSAAFPVTRKFADSSKLPSNGLRVR.

It belongs to the RuBisCO small chain family. As to quaternary structure, heterohexadecamer of 8 large and 8 small subunits.

It is found in the plastid. It localises to the chloroplast. RuBisCO catalyzes two reactions: the carboxylation of D-ribulose 1,5-bisphosphate, the primary event in carbon dioxide fixation, as well as the oxidative fragmentation of the pentose substrate. Both reactions occur simultaneously and in competition at the same active site. Although the small subunit is not catalytic it is essential for maximal activity. This chain is Ribulose bisphosphate carboxylase small subunit, chloroplastic, found in Zantedeschia aethiopica (White calla lily).